Reading from the N-terminus, the 124-residue chain is Small ribosomal subunit protein bS6 (124 aa).

Belongs to the bacterial ribosomal protein bS6 family.

In terms of biological role, binds together with bS18 to 16S ribosomal RNA. This is Small ribosomal subunit protein bS6 from Rippkaea orientalis (strain PCC 8801 / RF-1) (Cyanothece sp. (strain PCC 8801)).